A 227-amino-acid polypeptide reads, in one-letter code: Uracil-DNA glycosylase (227 aa).

D65 acts as the Proton acceptor in catalysis.

This sequence belongs to the uracil-DNA glycosylase (UDG) superfamily. UNG family.

Its subcellular location is the cytoplasm. It catalyses the reaction Hydrolyzes single-stranded DNA or mismatched double-stranded DNA and polynucleotides, releasing free uracil.. Functionally, excises uracil residues from the DNA which can arise as a result of misincorporation of dUMP residues by DNA polymerase or due to deamination of cytosine. This is Uracil-DNA glycosylase from Buchnera aphidicola subsp. Cinara cedri (strain Cc).